The sequence spans 349 residues: Quinolinate synthase (349 aa).

Positions 52 and 69 each coordinate iminosuccinate. Cys114 provides a ligand contact to [4Fe-4S] cluster. Iminosuccinate is bound by residues 140 to 142 (YFN) and Ser157. Residue Cys201 coordinates [4Fe-4S] cluster. Iminosuccinate contacts are provided by residues 227-229 (HPE) and Thr255. Residue Cys300 coordinates [4Fe-4S] cluster.

It belongs to the quinolinate synthase family. Type 2 subfamily. [4Fe-4S] cluster is required as a cofactor.

It is found in the cytoplasm. The enzyme catalyses iminosuccinate + dihydroxyacetone phosphate = quinolinate + phosphate + 2 H2O + H(+). Its pathway is cofactor biosynthesis; NAD(+) biosynthesis; quinolinate from iminoaspartate: step 1/1. Its function is as follows. Catalyzes the condensation of iminoaspartate with dihydroxyacetone phosphate to form quinolinate. This is Quinolinate synthase from Mycolicibacterium paratuberculosis (strain ATCC BAA-968 / K-10) (Mycobacterium paratuberculosis).